The following is a 337-amino-acid chain: MASALYACTKCHQRYPFEELSQGQQLCKECRIAHPIVKCTYCRSEFQQESKTNTICKKCAQNVKQFGTPKPCQYCNIIAAFIGTKCQRCTNSEKKYGPPQTCEQCKQQCAFDRKEEGRRKVDGKLLCWLCTLSYKRVLQKTKEQRKSLGSTHSNSSSSSLTEKDQHHSKHHHHHHHHHRHSSSHHKISSLSPEPEQGIWKQSHKSSTVIQNETPKKKPKLEFKPSNGDSSSINQSTDSGGTDNFVLISQLKEEVMSLKRLLQQRDQTILEKDKKLTELKADFQYQENNLRTKMNGMDKAHKDFVEQLQGKNRELLKQVAALSKGKKFDKSGSILTSP.

Residues 143–241 (EQRKSLGSTH…INQSTDSGGT (99 aa)) form a disordered region. A compositionally biased stretch (low complexity) spans 147 to 159 (SLGSTHSNSSSSS). The span at 166-187 (HHSKHHHHHHHHHRHSSSHHKI) shows a compositional bias: basic residues. A compositionally biased stretch (basic and acidic residues) spans 213-222 (TPKKKPKLEF). Residues 226-241 (NGDSSSINQSTDSGGT) are compositionally biased toward polar residues. Residues 301-326 (KDFVEQLQGKNRELLKQVAALSKGKK) adopt a coiled-coil conformation.

This sequence belongs to the FAM76 family.

Its function is as follows. Plays a role in hematopoiesis and immune system development, and participates in the inflammatory response. This is Protein FAM76B (fam76b) from Xenopus laevis (African clawed frog).